The sequence spans 448 residues: Tumor necrosis factor receptor superfamily member EDAR (448 aa).

Residues 1–26 form the signal peptide; it reads MAHVGDCTQTPWLPVLVVSLMCSARA. The Extracellular portion of the chain corresponds to 27-187; that stretch reads EYSNCGENEY…LSGQGHLATA (161 aa). TNFR-Cys repeat units lie at residues 30–71, 73–113, and 115–148; these read NCGE…DYGC, PCPA…DAEC, and PCLP…TKEC. Disulfide bonds link Cys31/Cys44, Cys47/Cys60, Cys50/Cys71, Cys74/Cys87, Cys93/Cys113, and Cys135/Cys148. N-linked (GlcNAc...) asparagine glycosylation is present at Asn38. The chain crosses the membrane as a helical span at residues 188–208; that stretch reads LIIAMSTIFIMAIAIVLIIMF. Over 209–448 the chain is Cytoplasmic; the sequence is YILKTKPSAP…PPASQPHAAS (240 aa). The segment at 220 to 297 is disordered; sequence CCTSHPGKSV…EEPAPDKQGS (78 aa). Over residues 233 to 243 the composition is skewed to basic and acidic residues; sequence VSKDEEKKEAP. The span at 271 to 283 shows a compositional bias: polar residues; it reads DASSENEQLLSRS. One can recognise a Death domain in the interval 358–431; the sequence is RMLSSTYNSE…DAVESLCADI (74 aa).

As to quaternary structure, binds to EDARADD. Associates with TRAF1, TRAF2, TRAF3 and NIK. In terms of tissue distribution, detected in fetal kidney, lung, skin and cultured neonatal epidermal keratinocytes. Not detected in lymphoblast and fibroblast cell lines.

The protein resides in the membrane. In terms of biological role, receptor for EDA isoform A1, but not for EDA isoform A2. Mediates the activation of NF-kappa-B and JNK. May promote caspase-independent cell death. This Homo sapiens (Human) protein is Tumor necrosis factor receptor superfamily member EDAR (EDAR).